The primary structure comprises 406 residues: Olfactomedin-like protein 3 (406 aa).

Residues 1-21 (MGPHTQLLILLLLSWLGPLQG) form the signal peptide. Positions 22 to 101 (QQHHLVEYME…REVDYLETQN (80 aa)) form a coiled coil. Residues 134–401 (DCGYTISQVR…QIVYKLEMRK (268 aa)) form the Olfactomedin-like domain. C135 and C328 are joined by a disulfide. An N-linked (GlcNAc...) asparagine glycan is attached at N248.

Belongs to the OLFML3 family.

The protein localises to the secreted. Its function is as follows. Secreted scaffold protein that plays an essential role in dorsoventral patterning during early development. Stabilizes axial formation by restricting chordin (CHRD) activity on the dorsal side. Acts by facilitating the association between the tolloid proteases and their substrate chordin (CHRD), leading to enhance chordin (CHRD) degradation. May have matrix-related function involved in placental and embryonic development, or play a similar role in other physiological processes. This chain is Olfactomedin-like protein 3 (OLFML3), found in Bos taurus (Bovine).